A 318-amino-acid chain; its full sequence is Olfactory receptor 2A2 (318 aa).

Topologically, residues 1-24 (MEGNQTWITDITLLGFQVGPALAI) are extracellular. N-linked (GlcNAc...) asparagine glycosylation is present at Asn4. The chain crosses the membrane as a helical span at residues 25–48 (LLCGLFSVFYTLTLLGNGVIFGII). Residues 49-56 (CLDSKLHT) lie on the Cytoplasmic side of the membrane. Residues 57 to 78 (PMYFFLSHLAIIDMSYASNNVP) form a helical membrane-spanning segment. At 79–99 (KMLANLMNQKRTISFVPCIMQ) the chain is on the extracellular side. Residues 100 to 119 (TFLYLAFAVTECLILVVMSY) traverse the membrane as a helical segment. Over 120 to 138 (DRYVAICHPFQYTVIMSWR) the chain is Cytoplasmic. Residues 139 to 157 (VCTILVLTSWSCGFALSLV) traverse the membrane as a helical segment. The Extracellular portion of the chain corresponds to 158 to 194 (HEILLLRLPFCGPRDVNHLFCEILSVLKLACADTWVN). A helical transmembrane segment spans residues 195 to 218 (QVVIFATCVFVLVGPLSLILVSYM). Residues 219–235 (HILGAILKIQTKEGRIK) are Cytoplasmic-facing. Residues 236 to 258 (AFSTCSSHLCVVGLFFGIAMVVY) traverse the membrane as a helical segment. Topologically, residues 259-271 (MVPDSNQREEQEK) are extracellular. A helical transmembrane segment spans residues 272 to 291 (MLSLFHSVFNPMLNPLIYSL). Over 292 to 310 (RNAQLKGALHRALQRKRSM) the chain is Cytoplasmic.

This sequence belongs to the G-protein coupled receptor 1 family.

The protein localises to the cell membrane. In terms of biological role, odorant receptor. The chain is Olfactory receptor 2A2 (OR2A2) from Homo sapiens (Human).